Reading from the N-terminus, the 480-residue chain is RuvB-like helicase 2 (480 aa).

73–80 (GEPSTGKT) contributes to the ATP binding site.

Belongs to the RuvB family. Forms homohexameric rings. May form a dodecamer with rept made of two stacked hexameric rings. Component of the chromatin remodeling Ino80 complex.

The protein localises to the nucleus. The enzyme catalyses ATP + H2O = ADP + phosphate + H(+). In terms of biological role, acts as a transcriptional coactivator in Wg signaling caused by altered arm signaling. Pont and rept interfere antagonistically with nuclear arm signaling function, and are required to enhance or reduce arm activity, respectively. Also an essential cofactor for the normal function of Myc; required for cellular proliferation and growth. Its function is as follows. Proposed core component of the chromatin remodeling Ino80 complex which is involved in transcriptional regulation, DNA replication and probably DNA repair. In Drosophila pseudoobscura pseudoobscura (Fruit fly), this protein is RuvB-like helicase 2.